Here is a 405-residue protein sequence, read N- to C-terminus: Glucose-1-phosphate adenylyltransferase 1 (405 aa).

Alpha-D-glucose 1-phosphate contacts are provided by residues Y96, G161, 176–177, and S194; that span reads EK.

The protein belongs to the bacterial/plant glucose-1-phosphate adenylyltransferase family. In terms of assembly, homotetramer.

It catalyses the reaction alpha-D-glucose 1-phosphate + ATP + H(+) = ADP-alpha-D-glucose + diphosphate. It participates in glycan biosynthesis; glycogen biosynthesis. Functionally, involved in the biosynthesis of ADP-glucose, a building block required for the elongation reactions to produce glycogen. Catalyzes the reaction between ATP and alpha-D-glucose 1-phosphate (G1P) to produce pyrophosphate and ADP-Glc. In Vibrio parahaemolyticus serotype O3:K6 (strain RIMD 2210633), this protein is Glucose-1-phosphate adenylyltransferase 1.